The sequence spans 51 residues: Large ribosomal subunit protein eL39 (51 aa).

It belongs to the eukaryotic ribosomal protein eL39 family.

The protein is Large ribosomal subunit protein eL39 (rpl39e) of Pyrococcus abyssi (strain GE5 / Orsay).